The chain runs to 198 residues: Vacuolar iron transporter homolog 4 (198 aa).

Over 1–32 (MESNNNNLNLDMEKDQETTFDYSKRAQWLRAA) the chain is Cytoplasmic. Residues 33-53 (VLGANDGLVSTASLMMGIGAV) traverse the membrane as a helical segment. Residues 54–60 (KQDVRIM) lie on the Vacuolar side of the membrane. Residues 61 to 81 (LLTGFAGLVAGACSMAIGEFI) form a helical membrane-spanning segment. The Cytoplasmic segment spans residues 82–114 (SVYSQYDIEVAQMKRESGGETKKEKLPSPTQAA). The helical transmembrane segment at 115 to 135 (IASALAFTLGAIVPLLAAAFV) threads the bilayer. Residues 136-141 (KEYKVR) are Vacuolar-facing. A helical membrane pass occupies residues 142-162 (IGVIVAAVTLALVMFGWLGAV). Residues 163–174 (LGKAPVVKSLVR) are Cytoplasmic-facing. The chain crosses the membrane as a helical span at residues 175–195 (VLIGGWLAMAITFGFTKLVGS). Residues 196 to 198 (HGL) are Vacuolar-facing.

Belongs to the CCC1 family.

It is found in the vacuole membrane. The enzyme catalyses Fe(2+)(in) = Fe(2+)(out). Its function is as follows. Probable vacuolar iron transporter that may be involved in the regulation of iron distribution throughout the plant. This chain is Vacuolar iron transporter homolog 4, found in Arabidopsis thaliana (Mouse-ear cress).